An 874-amino-acid polypeptide reads, in one-letter code: DNA primase (874 aa).

The segment at Cys-786–Cys-824 adopts a CHC2-type zinc-finger fold. Positions Ala-848 to Leu-857 are enriched in polar residues. Positions Ala-848–Asn-874 are disordered.

Belongs to the herpesviridae DNA primase family. Associates with the helicase and the primase-associated factor to form the helicase-primase factor.

Its subcellular location is the host nucleus. Its function is as follows. Essential component of the helicase/primase complex. Unwinds the DNA at the replication forks and generates single-stranded DNA for both leading and lagging strand synthesis. The primase initiates primer synthesis and thereby produces large amount of short RNA primers on the lagging strand that the polymerase elongates using dNTPs. This chain is DNA primase, found in Epstein-Barr virus (strain B95-8) (HHV-4).